The following is a 386-amino-acid chain: Palmitoyltransferase ZDHHC18 (386 aa).

The tract at residues 1–65 (MKDCEYQQIS…GSGSLGRRPR (65 aa)) is disordered. At 1–88 (MKDCEYQQIS…CGGRLMLAGH (88 aa)) the chain is on the cytoplasmic side. Phosphoserine is present on serine 19. Residues 27–40 (PAAPPGPSPGPAPG) are compositionally biased toward pro residues. Gly residues predominate over residues 49 to 59 (SGSGSGSGSGS). A helical membrane pass occupies residues 89-109 (GGVFALTLLLILSTTILFFIF). Topologically, residues 110–117 (DCPYLART) are lumenal. A helical membrane pass occupies residues 118–138 (LTLAIPIIAAILFFFVMSCLL). Residues 139 to 233 (QTSFTDPGIL…GNCVGRRNYR (95 aa)) are Cytoplasmic-facing. A DHHC domain is found at 190–240 (KYCFTCKMFRPPRTSHCSVCDNCVERFDHHCPWVGNCVGRRNYRFFYAFIL). Cysteine 220 (S-palmitoyl cysteine intermediate) is an active-site residue. A helical membrane pass occupies residues 234 to 254 (FFYAFILSLSFLTAFIFACVV). The Lumenal segment spans residues 255–275 (THLTLLSQGSNFLSALNKTPA). A helical membrane pass occupies residues 276–296 (GVLELVICFFSIWSILGLSGF). Residues 297–386 (HTYLVASNLT…PDASMVGGHP (90 aa)) are Cytoplasmic-facing. A disordered region spans residues 362–386 (LPSPIRSDEPACGAKPDASMVGGHP).

It belongs to the DHHC palmitoyltransferase family. ERF2/ZDHHC9 subfamily.

Its subcellular location is the golgi apparatus membrane. It carries out the reaction L-cysteinyl-[protein] + hexadecanoyl-CoA = S-hexadecanoyl-L-cysteinyl-[protein] + CoA. Palmitoyltransferase that catalyzes the addition of palmitate onto various protein substrates, such as CGAS, HRAS and LCK. Acts as a negative regulator of the cGAS-STING pathway be mediating palmitoylation and inactivation of CGAS. May also have a palmitoyltransferase activity toward the beta-2 adrenergic receptor/ADRB2 and therefore regulate G protein-coupled receptor signaling. The sequence is that of Palmitoyltransferase ZDHHC18 from Rattus norvegicus (Rat).